A 426-amino-acid chain; its full sequence is CAAX prenyl protease 1 homolog (426 aa).

The Lumenal segment spans residues 1–3 (MVN). A helical membrane pass occupies residues 4-24 (YFIISISFFLLEHFYSFYLNF). The Cytoplasmic portion of the chain corresponds to 25 to 70 (RQSKLLKNLTKVPEYCKDRITQEDFKKSQEYSKAKLDYKTLTSTIQ). The helical transmembrane segment at 71–91 (VLTTLLSFYYPVYPYFWNLSL) threads the bilayer. The Lumenal portion of the chain corresponds to 92–106 (ELAEKIGYPNEIIRS). The helical transmembrane segment at 107 to 127 (CFFFAFTVGVSVITEIPFSYY) threads the bilayer. At 128 to 150 (YQFILEEKFGYNRMTRTLFIKDK) the chain is on the cytoplasmic side. The helical transmembrane segment at 151 to 171 (IISTLLMIGFGLPILSLAIFI) threads the bilayer. Residues 172-178 (INWSGPQ) are Lumenal-facing. Residues 179-199 (LWFYCWLLLVAITLLSITIYP) traverse the membrane as a helical segment. The Cytoplasmic segment spans residues 200-294 (TFIQPLFNKF…GHYKMSHTLK (95 aa)). Zn(2+) is bound at residue H282. E283 is an active-site residue. A Zn(2+)-binding site is contributed by H286. The chain crosses the membrane as a helical span at residues 295 to 315 (QMLLVQVHLVTLLYAFSLLIN). Topologically, residues 316 to 333 (DDQLYQQFGFVSSKDSVL) are lumenal. A helical membrane pass occupies residues 334–354 (VGLTLFMFLYSPIDRIFSLLI). The Cytoplasmic portion of the chain corresponds to 355-426 (NIFSRKYEFQ…KVALYKLKNK (72 aa)). E362 lines the Zn(2+) pocket.

Belongs to the peptidase M48B family. The cofactor is Zn(2+).

It localises to the endoplasmic reticulum membrane. It carries out the reaction Hydrolyzes the peptide bond -P2-(S-farnesyl or geranylgeranyl)C-P1'-P2'-P3'-COOH where P1' and P2' are amino acids with aliphatic side chains and P3' is any C-terminal residue.. Proteolytically removes the C-terminal three residues of farnesylated proteins. The protein is CAAX prenyl protease 1 homolog (zmpste24) of Dictyostelium discoideum (Social amoeba).